Reading from the N-terminus, the 409-residue chain is Tryptophan synthase beta chain (409 aa).

Position 100 is an N6-(pyridoxal phosphate)lysine (K100).

This sequence belongs to the TrpB family. Tetramer of two alpha and two beta chains. Pyridoxal 5'-phosphate is required as a cofactor.

The catalysed reaction is (1S,2R)-1-C-(indol-3-yl)glycerol 3-phosphate + L-serine = D-glyceraldehyde 3-phosphate + L-tryptophan + H2O. Its pathway is amino-acid biosynthesis; L-tryptophan biosynthesis; L-tryptophan from chorismate: step 5/5. The beta subunit is responsible for the synthesis of L-tryptophan from indole and L-serine. This is Tryptophan synthase beta chain from Pyrobaculum arsenaticum (strain DSM 13514 / JCM 11321 / PZ6).